A 309-amino-acid chain; its full sequence is MKEIKIATRKSILALWQSEHIKARIEAQHKGMKVVLEGMKTKGDVILDTPLAKIGGKGLFTKELEDSMLKGETDIAVHSLKDVPVVFPEGLRLAAICSREDTRDAMISEKFAKFSDLPHGAKVGTTSLRRKMQLLIMRPDLEIISLRGNVQTRLRKLKEGEFDAIILAMAGINRLNIKAEVAHIYTFGFDEMIPAMGQGALGIEARDEKQILDETSFLNDENAVIETTIERDFVSVLEGGCQVPIGISARLKGDEISIDAIVGLPDGSEYIKDSLKTSKDKFQSVGKELAHKFIEKGARELLKRAEEMA.

Cys-241 carries the post-translational modification S-(dipyrrolylmethanemethyl)cysteine.

Belongs to the HMBS family. Monomer. Dipyrromethane serves as cofactor.

The catalysed reaction is 4 porphobilinogen + H2O = hydroxymethylbilane + 4 NH4(+). It participates in porphyrin-containing compound metabolism; protoporphyrin-IX biosynthesis; coproporphyrinogen-III from 5-aminolevulinate: step 2/4. Tetrapolymerization of the monopyrrole PBG into the hydroxymethylbilane pre-uroporphyrinogen in several discrete steps. The chain is Porphobilinogen deaminase from Campylobacter concisus (strain 13826).